Reading from the N-terminus, the 409-residue chain is uncharacterized protein (409 aa).

4 helical membrane-spanning segments follow: residues 20–40 (ILTMLGVIIGIAAIIAIVSML), 283–303 (FALLLGGIASISLLVGGIGVM), 344–364 (IGGILGVLAGFGIAKLLTVIF), and 372–392 (IPAVVGALIFSMAVGIIFGLL).

Belongs to the ABC-4 integral membrane protein family.

It localises to the cell membrane. This is an uncharacterized protein from Bacillus subtilis (strain 168).